A 436-amino-acid chain; its full sequence is Phosphomethylpyrimidine synthase (436 aa).

Substrate is bound by residues Asn69, Met98, Tyr127, His163, 185 to 187, 226 to 229, and Glu265; these read SRG and DACR. Position 269 (His269) interacts with Zn(2+). Substrate is bound at residue Tyr292. His333 is a binding site for Zn(2+). [4Fe-4S] cluster is bound by residues Cys409, Cys412, and Cys416.

This sequence belongs to the ThiC family. Requires [4Fe-4S] cluster as cofactor.

It carries out the reaction 5-amino-1-(5-phospho-beta-D-ribosyl)imidazole + S-adenosyl-L-methionine = 4-amino-2-methyl-5-(phosphooxymethyl)pyrimidine + CO + 5'-deoxyadenosine + formate + L-methionine + 3 H(+). It functions in the pathway cofactor biosynthesis; thiamine diphosphate biosynthesis. Its function is as follows. Catalyzes the synthesis of the hydroxymethylpyrimidine phosphate (HMP-P) moiety of thiamine from aminoimidazole ribotide (AIR) in a radical S-adenosyl-L-methionine (SAM)-dependent reaction. The protein is Phosphomethylpyrimidine synthase of Clostridium perfringens (strain SM101 / Type A).